Here is an 815-residue protein sequence, read N- to C-terminus: Bifunctional aspartokinase/homoserine dehydrogenase (815 aa).

Residues 1-249 (MRVLKFGGTS…VPDARLLPTL (249 aa)) are aspartokinase. The segment at 250-470 (SYREAMELSY…NNKKVVDMFL (221 aa)) is interface. ACT domains follow at residues 320–392 (VSGP…PIEV) and 401–478 (VVGD…GVGG). Positions 471–815 (VGVGGVGGEL…FADILRTLQH (345 aa)) are homoserine dehydrogenase. 5 residues coordinate NAD(+): V473, G475, V476, A504, and T555. V476 is a binding site for NADP(+). V476 is an NADPH binding site. T555 is a binding site for NADP(+). 3 residues coordinate NADPH: T555, S556, and K579. NADP(+) is bound at residue K579. Positions 606, 609, 611, and 613 each coordinate Na(+). Residues G664 and E667 each coordinate NADP(+). 2 residues coordinate L-homoserine: E667 and D678. K682 (proton donor) is an active-site residue. G797 lines the NAD(+) pocket. G797 is an NADP(+) binding site. Position 797 (G797) interacts with NADPH.

In the N-terminal section; belongs to the aspartokinase family. It in the C-terminal section; belongs to the homoserine dehydrogenase family. In terms of assembly, homotetramer. The cofactor is a metal cation.

It catalyses the reaction L-homoserine + NADP(+) = L-aspartate 4-semialdehyde + NADPH + H(+). The enzyme catalyses L-homoserine + NAD(+) = L-aspartate 4-semialdehyde + NADH + H(+). The catalysed reaction is L-aspartate + ATP = 4-phospho-L-aspartate + ADP. It functions in the pathway amino-acid biosynthesis; L-lysine biosynthesis via DAP pathway; (S)-tetrahydrodipicolinate from L-aspartate: step 1/4. Its pathway is amino-acid biosynthesis; L-methionine biosynthesis via de novo pathway; L-homoserine from L-aspartate: step 1/3. It participates in amino-acid biosynthesis; L-methionine biosynthesis via de novo pathway; L-homoserine from L-aspartate: step 3/3. The protein operates within amino-acid biosynthesis; L-threonine biosynthesis; L-threonine from L-aspartate: step 1/5. It functions in the pathway amino-acid biosynthesis; L-threonine biosynthesis; L-threonine from L-aspartate: step 3/5. In terms of biological role, bifunctional aspartate kinase and homoserine dehydrogenase that catalyzes the first and the third steps toward the synthesis of lysine, methionine and threonine from aspartate. This Haemophilus influenzae (strain ATCC 51907 / DSM 11121 / KW20 / Rd) protein is Bifunctional aspartokinase/homoserine dehydrogenase (thrA).